Reading from the N-terminus, the 480-residue chain is tRNA-2-methylthio-N(6)-dimethylallyladenosine synthase (480 aa).

Residues 25 to 145 (GVFYVHTLGC…LPQLLDQARI (121 aa)) enclose the MTTase N-terminal domain. Residues C34, C74, C108, C182, C186, and C189 each contribute to the [4Fe-4S] cluster site. The Radical SAM core domain occupies 168–397 (RASKVSSWVA…VALQERITEE (230 aa)). One can recognise a TRAM domain in the interval 400–470 (KTFEGRDVEV…RHNLIADPNP (71 aa)).

It belongs to the methylthiotransferase family. MiaB subfamily. Monomer. The cofactor is [4Fe-4S] cluster.

It localises to the cytoplasm. The catalysed reaction is N(6)-dimethylallyladenosine(37) in tRNA + (sulfur carrier)-SH + AH2 + 2 S-adenosyl-L-methionine = 2-methylsulfanyl-N(6)-dimethylallyladenosine(37) in tRNA + (sulfur carrier)-H + 5'-deoxyadenosine + L-methionine + A + S-adenosyl-L-homocysteine + 2 H(+). Its function is as follows. Catalyzes the methylthiolation of N6-(dimethylallyl)adenosine (i(6)A), leading to the formation of 2-methylthio-N6-(dimethylallyl)adenosine (ms(2)i(6)A) at position 37 in tRNAs that read codons beginning with uridine. This Bifidobacterium adolescentis (strain ATCC 15703 / DSM 20083 / NCTC 11814 / E194a) protein is tRNA-2-methylthio-N(6)-dimethylallyladenosine synthase.